The primary structure comprises 249 residues: MNVLSCSINTLIKEGLYEISGVEVGQHFYWQIGGFQVHAQVLITSWVVIAILLGSSVLAIRNPQTIPTDGQNFFEFVLEFIRDVSKTQIGEEYGPWVPFIGTLFLFIFVSNWSGALLPWKIIQLPQGELAAPTNDINTTVALALLTSVAYFYAGLSKKGLGYFSKYIQPTPILLPINILEDFTKPLSLSFRLFGNILADELVVVVLVSLVPLVVPIPVMFLGLFTSGIQALIFATLAAAYIGESMEGHH.

A run of 5 helical transmembrane segments spans residues 40 to 60 (QVLI…VLAI), 97 to 117 (VPFI…GALL), 136 to 156 (INTT…AGLS), 201 to 221 (LVVV…VMFL), and 222 to 242 (GLFT…AYIG).

This sequence belongs to the ATPase A chain family. As to quaternary structure, F-type ATPases have 2 components, CF(1) - the catalytic core - and CF(0) - the membrane proton channel. CF(1) has five subunits: alpha(3), beta(3), gamma(1), delta(1), epsilon(1). CF(0) has four main subunits: a, b, b' and c.

It is found in the plastid. The protein resides in the chloroplast thylakoid membrane. Functionally, key component of the proton channel; it plays a direct role in the translocation of protons across the membrane. In Olimarabidopsis pumila (Dwarf rocket), this protein is ATP synthase subunit a, chloroplastic.